The chain runs to 81 residues: CLAVATA3/ESR (CLE)-related protein 25 (81 aa).

The signal sequence occupies residues 1–30; it reads MGGNGIRALVGVIASLGLIVFLLVGILANS. The tract at residues 57 to 81 is disordered; that stretch reads KRKVPNGPDPIHNRKAETSRRPPRV. Hydroxyproline is present on residues Pro-61 and Pro-64. Pro-64 is a glycosylation site (O-linked (Ara...) hydroxyproline). The segment covering 67 to 81 has biased composition (basic and acidic residues); it reads IHNRKAETSRRPPRV.

The protein belongs to the CLV3/ESR signal peptide family. The O-glycosylation (arabinosylation) of the hydroxyproline Pro-64 enhances binding affinity of the CLE25p peptide for its receptor. Mostly expressed in flowers and siliques, and, to a lower extent, in roots, stems, apex, seedlings, leaves and pollen.

The protein localises to the secreted. It is found in the extracellular space. Its function is as follows. Extracellular signal peptide that regulates cell fate. Represses root apical meristem maintenance. Regulates the transition of protophloem cells from proliferation to differentiation, thus impinging on postembryonic growth capacity of the root meristem; this signaling pathway requires CRN and CLV2. This Arabidopsis thaliana (Mouse-ear cress) protein is CLAVATA3/ESR (CLE)-related protein 25.